Reading from the N-terminus, the 200-residue chain is Recombination protein RecR (200 aa).

The C4-type zinc-finger motif lies at cysteine 58 to cysteine 73. The 96-residue stretch at serine 81 to proline 176 folds into the Toprim domain.

This sequence belongs to the RecR family.

May play a role in DNA repair. It seems to be involved in an RecBC-independent recombinational process of DNA repair. It may act with RecF and RecO. The protein is Recombination protein RecR of Rickettsia bellii (strain OSU 85-389).